The sequence spans 400 residues: Queuine tRNA-ribosyltransferase catalytic subunit (400 aa).

The Proton acceptor role is filled by Asp-89. Substrate-binding positions include 89–93 (DSGGF), Asp-143, Gln-185, and Gly-212. The interval 243-249 (GVGFPVD) is RNA binding. Asp-262 acts as the Nucleophile in catalysis. Residues 267–271 (TRTAR) are RNA binding; important for wobble base 34 recognition. The Zn(2+) site is built by Cys-301, Cys-303, Cys-306, and His-331.

Belongs to the queuine tRNA-ribosyltransferase family. As to quaternary structure, heterodimer of a catalytic subunit and an accessory subunit. Requires Zn(2+) as cofactor.

The protein localises to the cytoplasm. The enzyme catalyses guanosine(34) in tRNA + queuine = queuosine(34) in tRNA + guanine. Functionally, catalytic subunit of the queuine tRNA-ribosyltransferase (TGT) that catalyzes the base-exchange of a guanine (G) residue with queuine (Q) at position 34 (anticodon wobble position) in tRNAs with GU(N) anticodons (tRNA-Asp, -Asn, -His and -Tyr), resulting in the hypermodified nucleoside queuosine (7-(((4,5-cis-dihydroxy-2-cyclopenten-1-yl)amino)methyl)-7-deazaguanosine). Catalysis occurs through a double-displacement mechanism. The nucleophile active site attacks the C1' of nucleotide 34 to detach the guanine base from the RNA, forming a covalent enzyme-RNA intermediate. The proton acceptor active site deprotonates the incoming queuine, allowing a nucleophilic attack on the C1' of the ribose to form the product. The chain is Queuine tRNA-ribosyltransferase catalytic subunit from Caenorhabditis briggsae.